The following is a 259-amino-acid chain: 5'-nucleotidase SurE (259 aa).

The a divalent metal cation site is built by aspartate 10, aspartate 11, serine 41, and asparagine 96.

The protein belongs to the SurE nucleotidase family. Requires a divalent metal cation as cofactor.

The protein localises to the cytoplasm. The catalysed reaction is a ribonucleoside 5'-phosphate + H2O = a ribonucleoside + phosphate. Its function is as follows. Nucleotidase that shows phosphatase activity on nucleoside 5'-monophosphates. The polypeptide is 5'-nucleotidase SurE (Wolinella succinogenes (strain ATCC 29543 / DSM 1740 / CCUG 13145 / JCM 31913 / LMG 7466 / NCTC 11488 / FDC 602W) (Vibrio succinogenes)).